A 250-amino-acid chain; its full sequence is 2,3-bisphosphoglycerate-dependent phosphoglycerate mutase (250 aa).

Substrate contacts are provided by residues 8–15, 21–22, R60, 87–90, K98, 114–115, and 183–184; these read RHGESQWN, TG, ERHY, RR, and GN. H9 functions as the Tele-phosphohistidine intermediate in the catalytic mechanism. E87 serves as the catalytic Proton donor/acceptor.

The protein belongs to the phosphoglycerate mutase family. BPG-dependent PGAM subfamily. As to quaternary structure, homodimer.

It carries out the reaction (2R)-2-phosphoglycerate = (2R)-3-phosphoglycerate. It functions in the pathway carbohydrate degradation; glycolysis; pyruvate from D-glyceraldehyde 3-phosphate: step 3/5. Functionally, catalyzes the interconversion of 2-phosphoglycerate and 3-phosphoglycerate. This Bordetella parapertussis (strain 12822 / ATCC BAA-587 / NCTC 13253) protein is 2,3-bisphosphoglycerate-dependent phosphoglycerate mutase.